The primary structure comprises 350 residues: Beta-ketoacyl-[acyl-carrier-protein] synthase III (350 aa).

Catalysis depends on residues cysteine 120 and histidine 256. Residues 257–261 are ACP-binding; sequence QANVR. Asparagine 286 is a catalytic residue.

It belongs to the thiolase-like superfamily. FabH family. Homodimer.

Its subcellular location is the cytoplasm. It catalyses the reaction malonyl-[ACP] + acetyl-CoA + H(+) = 3-oxobutanoyl-[ACP] + CO2 + CoA. The protein operates within lipid metabolism; fatty acid biosynthesis. Functionally, catalyzes the condensation reaction of fatty acid synthesis by the addition to an acyl acceptor of two carbons from malonyl-ACP. Catalyzes the first condensation reaction which initiates fatty acid synthesis and may therefore play a role in governing the total rate of fatty acid production. Possesses both acetoacetyl-ACP synthase and acetyl transacylase activities. Its substrate specificity determines the biosynthesis of branched-chain and/or straight-chain of fatty acids. In Deinococcus deserti (strain DSM 17065 / CIP 109153 / LMG 22923 / VCD115), this protein is Beta-ketoacyl-[acyl-carrier-protein] synthase III.